The following is a 76-amino-acid chain: Probable 26S proteasome complex subunit dss-1 (76 aa).

Disordered regions lie at residues Met1–Phe28 and Asp52–Ala76. 2 stretches are compositionally biased toward basic and acidic residues: residues Thr7 to Thr20 and Glu57 to Lys70.

Belongs to the DSS1/SEM1 family. As to quaternary structure, part of the 26S proteasome.

The protein resides in the nucleus. The protein localises to the cytoplasm. Its function is as follows. Subunit of the 26S proteasome which plays a role in ubiquitin-dependent proteolysis. Has an essential role in oogenesis and larval growth. Required for intestinal function and default lifespan. This is Probable 26S proteasome complex subunit dss-1 from Caenorhabditis briggsae.